Consider the following 1094-residue polypeptide: Probable arabinosyltransferase A (1094 aa).

Helical transmembrane passes span 12-34 (IARLAAVVSGIAGLLLCGIVPLL), 205-224 (AVMLLGVLAVLVAMVGLAAL), 247-269 (GFASRLADAAVIATLLLWHVIGA), 322-344 (VWMRLPATLAGIACWLIVSRFVL), 356-375 (SNRVAVFTAGAVFLSAWLPF), 408-430 (AAVAIIVATLTATLAPQGLIALA), 451-470 (GLLAPLAVLAAALSLITVVV), 519-536 (FAVLVLLFCLFGVLFVLL), 543-565 (GLASGPAWRLIGTTAVGLLLLTF), 575-597 (GAFAGLAGVLGAVTAFTFARIGL), 604-626 (TLYVTALLFVLAWATSGINGWFY), 641-663 (IASHPVTSMFLTLSILTGLLAAW), and 684-706 (ILASTPLLVVAVIMVAGEVGSMA).

This sequence belongs to the emb family.

It is found in the cell membrane. Arabinosyl transferase responsible for the polymerization of arabinose into the arabinan of arabinogalactan. This Mycobacterium tuberculosis (strain CDC 1551 / Oshkosh) protein is Probable arabinosyltransferase A (embA).